The following is a 172-amino-acid chain: Translationally-controlled tumor protein homolog (172 aa).

The 172-residue stretch at 1-172 folds into the TCTP domain; sequence MKIYKDIITG…FKHGLDEEKC (172 aa).

Belongs to the TCTP family.

The protein localises to the cytoplasm. In terms of biological role, involved in calcium binding and microtubule stabilization. The chain is Translationally-controlled tumor protein homolog from Drosophila yakuba (Fruit fly).